The primary structure comprises 228 residues: 2-C-methyl-D-erythritol 4-phosphate cytidylyltransferase (228 aa).

This sequence belongs to the IspD/TarI cytidylyltransferase family. IspD subfamily.

It carries out the reaction 2-C-methyl-D-erythritol 4-phosphate + CTP + H(+) = 4-CDP-2-C-methyl-D-erythritol + diphosphate. The protein operates within isoprenoid biosynthesis; isopentenyl diphosphate biosynthesis via DXP pathway; isopentenyl diphosphate from 1-deoxy-D-xylulose 5-phosphate: step 2/6. Its function is as follows. Catalyzes the formation of 4-diphosphocytidyl-2-C-methyl-D-erythritol from CTP and 2-C-methyl-D-erythritol 4-phosphate (MEP). This chain is 2-C-methyl-D-erythritol 4-phosphate cytidylyltransferase, found in Halalkalibacterium halodurans (strain ATCC BAA-125 / DSM 18197 / FERM 7344 / JCM 9153 / C-125) (Bacillus halodurans).